The primary structure comprises 670 residues: ATP synthase subunit alpha 2 (670 aa).

Residue 180–187 coordinates ATP; it reads GDRATGKT. Residues 527 to 670 form a disordered region; it reads AEDAAGDIGG…DAEAEARHKR (144 aa). The span at 543 to 588 shows a compositional bias: basic and acidic residues; that stretch reads ARGDADRDADHGANREVSREVSPEASREVSREVSREVSHEADRDAA. Positions 589-599 are enriched in low complexity; it reads ADAARVAGRAP. Positions 621–639 are enriched in basic and acidic residues; the sequence is ADGDRASASRPRPDARGDA. A compositionally biased stretch (low complexity) spans 640-661; the sequence is ARTAPSPQGGAEVNVNAAANVD.

This sequence belongs to the ATPase alpha/beta chains family. F-type ATPases have 2 components, CF(1) - the catalytic core - and CF(0) - the membrane proton channel. CF(1) has five subunits: alpha(3), beta(3), gamma(1), delta(1), epsilon(1). CF(0) has three main subunits: a(1), b(2) and c(9-12). The alpha and beta chains form an alternating ring which encloses part of the gamma chain. CF(1) is attached to CF(0) by a central stalk formed by the gamma and epsilon chains, while a peripheral stalk is formed by the delta and b chains.

It is found in the cell inner membrane. It catalyses the reaction ATP + H2O + 4 H(+)(in) = ADP + phosphate + 5 H(+)(out). Its function is as follows. Produces ATP from ADP in the presence of a proton gradient across the membrane. The alpha chain is a regulatory subunit. The chain is ATP synthase subunit alpha 2 from Burkholderia pseudomallei (strain 668).